A 281-amino-acid polypeptide reads, in one-letter code: Probable endonuclease 4 (281 aa).

9 residues coordinate Zn(2+): His-69, His-109, Glu-145, Asp-179, His-182, His-216, Asp-229, His-231, and Glu-261.

It belongs to the AP endonuclease 2 family. Requires Zn(2+) as cofactor.

The catalysed reaction is Endonucleolytic cleavage to 5'-phosphooligonucleotide end-products.. Functionally, endonuclease IV plays a role in DNA repair. It cleaves phosphodiester bonds at apurinic or apyrimidinic (AP) sites, generating a 3'-hydroxyl group and a 5'-terminal sugar phosphate. This chain is Probable endonuclease 4, found in Parabacteroides distasonis (strain ATCC 8503 / DSM 20701 / CIP 104284 / JCM 5825 / NCTC 11152).